The sequence spans 589 residues: CTP synthase (589 aa).

Residues 1–281 (MPQSRTHSRT…DAYVVRQLGL (281 aa)) are amidoligase domain. S23 lines the CTP pocket. UTP is bound at residue S23. ATP-binding positions include 24 to 29 (SLGKGL) and D81. 2 residues coordinate Mg(2+): D81 and E155. Residues 162–164 (DIE), 202–207 (KTKPTQ), and K238 contribute to the CTP site. UTP contacts are provided by residues 202 to 207 (KTKPTQ) and K238. In terms of domain architecture, Glutamine amidotransferase type-1 spans 306-554 (RIALVGKYVD…VDAALRHKLE (249 aa)). L-glutamine is bound at residue G369. C396 acts as the Nucleophile; for glutamine hydrolysis in catalysis. Residues 397 to 400 (LGLQ), E419, and R480 each bind L-glutamine. Active-site residues include H527 and E529. Residues 562-589 (HGEERAAADDEIAESADRDEVASVDSAG) form a disordered region.

This sequence belongs to the CTP synthase family. In terms of assembly, homotetramer.

The enzyme catalyses UTP + L-glutamine + ATP + H2O = CTP + L-glutamate + ADP + phosphate + 2 H(+). The catalysed reaction is L-glutamine + H2O = L-glutamate + NH4(+). It catalyses the reaction UTP + NH4(+) + ATP = CTP + ADP + phosphate + 2 H(+). It functions in the pathway pyrimidine metabolism; CTP biosynthesis via de novo pathway; CTP from UDP: step 2/2. With respect to regulation, allosterically activated by GTP, when glutamine is the substrate; GTP has no effect on the reaction when ammonia is the substrate. The allosteric effector GTP functions by stabilizing the protein conformation that binds the tetrahedral intermediate(s) formed during glutamine hydrolysis. Inhibited by the product CTP, via allosteric rather than competitive inhibition. Functionally, catalyzes the ATP-dependent amination of UTP to CTP with either L-glutamine or ammonia as the source of nitrogen. Regulates intracellular CTP levels through interactions with the four ribonucleotide triphosphates. In Rhodococcus opacus (strain B4), this protein is CTP synthase.